The primary structure comprises 490 residues: GTPase Der (490 aa).

EngA-type G domains are found at residues 3-166 and 203-376; these read PVVA…MEDL and IKLA…DSST. GTP-binding positions include 9–16, 56–60, 118–121, 209–216, 256–260, and 321–324; these read GRPNVGKS, DTGGI, NKTD, DTAGV, and NKWD. Residues 377-461 enclose the KH-like domain; the sequence is RRVGTSMLTR…PIRIQFKEGE (85 aa).

The protein belongs to the TRAFAC class TrmE-Era-EngA-EngB-Septin-like GTPase superfamily. EngA (Der) GTPase family. As to quaternary structure, associates with the 50S ribosomal subunit.

In terms of biological role, GTPase that plays an essential role in the late steps of ribosome biogenesis. This Escherichia coli O17:K52:H18 (strain UMN026 / ExPEC) protein is GTPase Der.